A 291-amino-acid polypeptide reads, in one-letter code: 29 kDa ribonucleoprotein B, chloroplastic (291 aa).

An RRM 1 domain is found at 87-165 (LKLFVGNLPF…RAIRVNAGPA (79 aa)). Residues 164-202 (PAPAKRENSSFGGGRGGNSSYGGGRDGNSSFGGARGGRS) form a disordered region. The tract at residues 166–206 (PAKRENSSFGGGRGGNSSYGGGRDGNSSFGGARGGRSVDSS) is linker (Gly-rich). Over residues 174 to 189 (FGGGRGGNSSYGGGRD) the composition is skewed to gly residues. One can recognise an RRM 2 domain in the interval 207–285 (NRVYVGNLSW…RSIRVSAAEE (79 aa)).

It localises to the plastid. It is found in the chloroplast. Functionally, could be involved in splicing and/or processing of chloroplast RNA's. The sequence is that of 29 kDa ribonucleoprotein B, chloroplastic from Nicotiana sylvestris (Wood tobacco).